The following is a 32-amino-acid chain: Beta-amanitin proprotein (32 aa).

Positions 1 to 10 are excised as a propeptide; sequence MSDINATRLP. Residues 11-18 constitute a cross-link (cyclopeptide (Ile-Pro)); sequence IWGIGCDP. A cross-link (2'-cysteinyl-6'-hydroxytryptophan sulfoxide (Trp-Cys)) is located at residues 12–16; that stretch reads WGIGC. A propeptide spanning residues 19 to 32 is cleaved from the precursor; sequence CIGDDVTILLTRGE.

This sequence belongs to the MSDIN fungal toxin family. Processed by the macrocyclase-peptidase enzyme POPB to yield a toxic cyclic decapeptide. POPB first removes 10 residues from the N-terminus. Conformational trapping of the remaining peptide forces the enzyme to release this intermediate rather than proceed to macrocyclization. The enzyme rebinds the remaining peptide in a different conformation and catalyzes macrocyclization of the N-terminal 8 residues.

Functionally, toxin belonging to the bicyclic octapeptides amatoxins that acts by binding non-competitively to RNA polymerase II and greatly slowing the elongation of transcripts from target promoters. The chain is Beta-amanitin proprotein from Amanita phalloides (Death cap).